Reading from the N-terminus, the 548-residue chain is Non-structural protein NS1 (548 aa).

It belongs to the orbivirus non-structural protein NS1 family.

This is Non-structural protein NS1 (Segment-5) from Camelus dromedarius (Dromedary).